The sequence spans 561 residues: uncharacterized protein (561 aa).

Helical transmembrane passes span 29–49 and 80–100; these read FIFN…KKII and FLFH…AVVI.

It localises to the cell membrane. This is an uncharacterized protein from Mycoplasma pneumoniae (strain ATCC 29342 / M129 / Subtype 1) (Mycoplasmoides pneumoniae).